A 187-amino-acid chain; its full sequence is Ribosome-recycling factor (187 aa).

The protein belongs to the RRF family.

It localises to the cytoplasm. Responsible for the release of ribosomes from messenger RNA at the termination of protein biosynthesis. May increase the efficiency of translation by recycling ribosomes from one round of translation to another. The sequence is that of Ribosome-recycling factor from Methylobacterium sp. (strain 4-46).